A 616-amino-acid polypeptide reads, in one-letter code: Dihydroxy-acid dehydratase (616 aa).

Asp-81 contacts Mg(2+). Residue Cys-122 coordinates [2Fe-2S] cluster. Residues Asp-123 and Lys-124 each coordinate Mg(2+). Lys-124 is subject to N6-carboxylysine. Cys-197 provides a ligand contact to [2Fe-2S] cluster. Glu-493 is a Mg(2+) binding site. Ser-519 serves as the catalytic Proton acceptor.

Belongs to the IlvD/Edd family. As to quaternary structure, homodimer. The cofactor is [2Fe-2S] cluster. It depends on Mg(2+) as a cofactor.

It catalyses the reaction (2R)-2,3-dihydroxy-3-methylbutanoate = 3-methyl-2-oxobutanoate + H2O. It carries out the reaction (2R,3R)-2,3-dihydroxy-3-methylpentanoate = (S)-3-methyl-2-oxopentanoate + H2O. The protein operates within amino-acid biosynthesis; L-isoleucine biosynthesis; L-isoleucine from 2-oxobutanoate: step 3/4. It participates in amino-acid biosynthesis; L-valine biosynthesis; L-valine from pyruvate: step 3/4. In terms of biological role, functions in the biosynthesis of branched-chain amino acids. Catalyzes the dehydration of (2R,3R)-2,3-dihydroxy-3-methylpentanoate (2,3-dihydroxy-3-methylvalerate) into 2-oxo-3-methylpentanoate (2-oxo-3-methylvalerate) and of (2R)-2,3-dihydroxy-3-methylbutanoate (2,3-dihydroxyisovalerate) into 2-oxo-3-methylbutanoate (2-oxoisovalerate), the penultimate precursor to L-isoleucine and L-valine, respectively. The polypeptide is Dihydroxy-acid dehydratase (Corynebacterium kroppenstedtii (strain DSM 44385 / JCM 11950 / CIP 105744 / CCUG 35717)).